A 250-amino-acid polypeptide reads, in one-letter code: 3-deoxy-manno-octulosonate cytidylyltransferase (250 aa).

Belongs to the KdsB family.

It is found in the cytoplasm. The catalysed reaction is 3-deoxy-alpha-D-manno-oct-2-ulosonate + CTP = CMP-3-deoxy-beta-D-manno-octulosonate + diphosphate. It participates in nucleotide-sugar biosynthesis; CMP-3-deoxy-D-manno-octulosonate biosynthesis; CMP-3-deoxy-D-manno-octulosonate from 3-deoxy-D-manno-octulosonate and CTP: step 1/1. It functions in the pathway bacterial outer membrane biogenesis; lipopolysaccharide biosynthesis. In terms of biological role, activates KDO (a required 8-carbon sugar) for incorporation into bacterial lipopolysaccharide in Gram-negative bacteria. The chain is 3-deoxy-manno-octulosonate cytidylyltransferase from Geobacter sulfurreducens (strain ATCC 51573 / DSM 12127 / PCA).